Consider the following 187-residue polypeptide: Small ribosomal subunit protein uS4 (187 aa).

One can recognise an S4 RNA-binding domain in the interval 105-174 (RRLQTLVFRK…DNHPERAKIV (70 aa)).

The protein belongs to the universal ribosomal protein uS4 family. In terms of assembly, part of the 30S ribosomal subunit. Contacts protein S5. The interaction surface between S4 and S5 is involved in control of translational fidelity.

In terms of biological role, one of the primary rRNA binding proteins, it binds directly to 16S rRNA where it nucleates assembly of the body of the 30S subunit. Functionally, with S5 and S12 plays an important role in translational accuracy. The polypeptide is Small ribosomal subunit protein uS4 (Methanocaldococcus jannaschii (strain ATCC 43067 / DSM 2661 / JAL-1 / JCM 10045 / NBRC 100440) (Methanococcus jannaschii)).